A 708-amino-acid polypeptide reads, in one-letter code: Elongation factor G 1 (708 aa).

Residues 9 to 295 enclose the tr-type G domain; the sequence is AKVRNIGIMA…AVVRYLPTPL (287 aa). Residues 18 to 25, 86 to 90, and 140 to 143 contribute to the GTP site; these read AHIDAGKT, DTPGH, and NKLD.

Belongs to the TRAFAC class translation factor GTPase superfamily. Classic translation factor GTPase family. EF-G/EF-2 subfamily.

Its subcellular location is the cytoplasm. Its function is as follows. Catalyzes the GTP-dependent ribosomal translocation step during translation elongation. During this step, the ribosome changes from the pre-translocational (PRE) to the post-translocational (POST) state as the newly formed A-site-bound peptidyl-tRNA and P-site-bound deacylated tRNA move to the P and E sites, respectively. Catalyzes the coordinated movement of the two tRNA molecules, the mRNA and conformational changes in the ribosome. The protein is Elongation factor G 1 (fusA) of Streptomyces coelicolor (strain ATCC BAA-471 / A3(2) / M145).